A 558-amino-acid chain; its full sequence is Dihydroxy-acid dehydratase (558 aa).

Asp78 lines the Mg(2+) pocket. Cys119 is a [2Fe-2S] cluster binding site. Residues Asp120 and Lys121 each coordinate Mg(2+). N6-carboxylysine is present on Lys121. Cys192 is a binding site for [2Fe-2S] cluster. Glu446 contributes to the Mg(2+) binding site. The active-site Proton acceptor is the Ser472.

Belongs to the IlvD/Edd family. As to quaternary structure, homodimer. Requires [2Fe-2S] cluster as cofactor. Mg(2+) is required as a cofactor.

It carries out the reaction (2R)-2,3-dihydroxy-3-methylbutanoate = 3-methyl-2-oxobutanoate + H2O. The enzyme catalyses (2R,3R)-2,3-dihydroxy-3-methylpentanoate = (S)-3-methyl-2-oxopentanoate + H2O. It participates in amino-acid biosynthesis; L-isoleucine biosynthesis; L-isoleucine from 2-oxobutanoate: step 3/4. The protein operates within amino-acid biosynthesis; L-valine biosynthesis; L-valine from pyruvate: step 3/4. In terms of biological role, functions in the biosynthesis of branched-chain amino acids. Catalyzes the dehydration of (2R,3R)-2,3-dihydroxy-3-methylpentanoate (2,3-dihydroxy-3-methylvalerate) into 2-oxo-3-methylpentanoate (2-oxo-3-methylvalerate) and of (2R)-2,3-dihydroxy-3-methylbutanoate (2,3-dihydroxyisovalerate) into 2-oxo-3-methylbutanoate (2-oxoisovalerate), the penultimate precursor to L-isoleucine and L-valine, respectively. This chain is Dihydroxy-acid dehydratase, found in Campylobacter jejuni subsp. doylei (strain ATCC BAA-1458 / RM4099 / 269.97).